Reading from the N-terminus, the 562-residue chain is Probable sesquiterpene synthase (562 aa).

Mg(2+) contacts are provided by Asp315, Asp319, and Glu467. A DDXXD motif motif is present at residues 315–319 (DDIYD).

Belongs to the terpene synthase family. Tpsa subfamily. Mg(2+) serves as cofactor. It depends on Mn(2+) as a cofactor.

Its function is as follows. Sesquiterpene synthase. This Santalum austrocaledonicum (Sandalwood) protein is Probable sesquiterpene synthase (SesquiTPS).